Here is a 275-residue protein sequence, read N- to C-terminus: NH(3)-dependent NAD(+) synthetase (275 aa).

50 to 57 (GISGGVDS) is a binding site for ATP. Residue Asp-56 participates in Mg(2+) binding. Residue Arg-147 participates in deamido-NAD(+) binding. Thr-167 is an ATP binding site. Glu-172 lines the Mg(2+) pocket. Positions 180 and 187 each coordinate deamido-NAD(+). Lys-196 and Thr-218 together coordinate ATP. 267 to 268 (HK) is a deamido-NAD(+) binding site.

Belongs to the NAD synthetase family. In terms of assembly, homodimer.

It catalyses the reaction deamido-NAD(+) + NH4(+) + ATP = AMP + diphosphate + NAD(+) + H(+). It functions in the pathway cofactor biosynthesis; NAD(+) biosynthesis; NAD(+) from deamido-NAD(+) (ammonia route): step 1/1. Catalyzes the ATP-dependent amidation of deamido-NAD to form NAD. Uses ammonia as a nitrogen source. This Pseudomonas savastanoi pv. phaseolicola (strain 1448A / Race 6) (Pseudomonas syringae pv. phaseolicola (strain 1448A / Race 6)) protein is NH(3)-dependent NAD(+) synthetase.